The sequence spans 310 residues: D-alanine--D-alanine ligase (310 aa).

The ATP-grasp domain occupies 107 to 302 (KQAFQAARLT…FEDLVERILA (196 aa)). 135–188 (EFSLPVVVKPSQEGSSVGVSIVKKESEFAAAMKEAFRYDREILVEQFIKGSEVQ) contacts ATP. The Mg(2+) site is built by Asp256, Glu269, and Asn271.

The protein belongs to the D-alanine--D-alanine ligase family. The cofactor is Mg(2+). Mn(2+) is required as a cofactor.

The protein resides in the cytoplasm. It catalyses the reaction 2 D-alanine + ATP = D-alanyl-D-alanine + ADP + phosphate + H(+). It participates in cell wall biogenesis; peptidoglycan biosynthesis. In terms of biological role, cell wall formation. The chain is D-alanine--D-alanine ligase from Geotalea uraniireducens (strain Rf4) (Geobacter uraniireducens).